We begin with the raw amino-acid sequence, 181 residues long: Putative ankyrin repeat protein RBE_0150 (181 aa).

ANK repeat units follow at residues 50-79 (IGQK…KLGT), 83-114 (LGRT…DINA), 118-147 (SGST…DYFT), and 151-180 (LGQT…AGYY).

The polypeptide is Putative ankyrin repeat protein RBE_0150 (Rickettsia bellii (strain RML369-C)).